The sequence spans 220 residues: Pyrrolidone-carboxylate peptidase 1 (220 aa).

Residues Glu80, Cys143, and His172 contribute to the active site.

The protein belongs to the peptidase C15 family. As to quaternary structure, homotetramer.

The protein resides in the cytoplasm. It carries out the reaction Release of an N-terminal pyroglutamyl group from a polypeptide, the second amino acid generally not being Pro.. In terms of biological role, removes 5-oxoproline from various penultimate amino acid residues except L-proline. The chain is Pyrrolidone-carboxylate peptidase 1 from Photorhabdus laumondii subsp. laumondii (strain DSM 15139 / CIP 105565 / TT01) (Photorhabdus luminescens subsp. laumondii).